The primary structure comprises 339 residues: Lipoyl synthase (339 aa).

The interval 13-35 (RPKLDAPARPRHPEKAHRPDTAI) is disordered. Residues cysteine 68, cysteine 73, cysteine 79, cysteine 94, cysteine 98, cysteine 101, and serine 307 each contribute to the [4Fe-4S] cluster site. One can recognise a Radical SAM core domain in the interval 80-296 (WEKRHATFMI…ETTAYAKGFL (217 aa)).

It belongs to the radical SAM superfamily. Lipoyl synthase family. [4Fe-4S] cluster is required as a cofactor.

It is found in the cytoplasm. The catalysed reaction is [[Fe-S] cluster scaffold protein carrying a second [4Fe-4S](2+) cluster] + N(6)-octanoyl-L-lysyl-[protein] + 2 oxidized [2Fe-2S]-[ferredoxin] + 2 S-adenosyl-L-methionine + 4 H(+) = [[Fe-S] cluster scaffold protein] + N(6)-[(R)-dihydrolipoyl]-L-lysyl-[protein] + 4 Fe(3+) + 2 hydrogen sulfide + 2 5'-deoxyadenosine + 2 L-methionine + 2 reduced [2Fe-2S]-[ferredoxin]. It functions in the pathway protein modification; protein lipoylation via endogenous pathway; protein N(6)-(lipoyl)lysine from octanoyl-[acyl-carrier-protein]: step 2/2. In terms of biological role, catalyzes the radical-mediated insertion of two sulfur atoms into the C-6 and C-8 positions of the octanoyl moiety bound to the lipoyl domains of lipoate-dependent enzymes, thereby converting the octanoylated domains into lipoylated derivatives. This Methylorubrum extorquens (strain PA1) (Methylobacterium extorquens) protein is Lipoyl synthase.